The sequence spans 591 residues: V-type ATP synthase alpha chain (591 aa).

Residue 232–239 participates in ATP binding; that stretch reads GPFGAGKT.

It belongs to the ATPase alpha/beta chains family.

It catalyses the reaction ATP + H2O + 4 H(+)(in) = ADP + phosphate + 5 H(+)(out). Its function is as follows. Produces ATP from ADP in the presence of a proton gradient across the membrane. The V-type alpha chain is a catalytic subunit. The polypeptide is V-type ATP synthase alpha chain (Nitrosococcus oceani (strain ATCC 19707 / BCRC 17464 / JCM 30415 / NCIMB 11848 / C-107)).